Here is a 1147-residue protein sequence, read N- to C-terminus: Myosin heavy chain IB (1147 aa).

The Myosin motor domain occupies 9-677; it reads RGVDDLVLMP…TLFHLEECLD (669 aa). ATP is bound at residue 103–110; it reads GESGAGKT. The residue at position 315 (Ser-315) is a Phosphoserine. Residues 551 to 573 form an actin-binding region; it reads CDALMEALSRCSPHYIRCIKPND. Residues 715-900 form the TH1 domain; that stretch reads KERQRHSVNR…RANIQIGIAT (186 aa). Disordered stretches follow at residues 901-954 and 969-1089; these read GLPK…YSQP and AAVP…APAA. Gly residues-rich tracts occupy residues 916 to 951 and 975 to 1079; these read SGGGGGYGGGRGGGGGGRGAAGGGRGGFGGGGGGGY and GRGG…GAGR. Residues 1090–1147 form the SH3 domain; the sequence is PAKPQVKALYDYDAQTGDELTFKEGDTIIVHQKDPAGWWEGELNGKRGWVPANYVQDI.

Belongs to the TRAFAC class myosin-kinesin ATPase superfamily. Myosin family. Myosin I heavy chain is single-headed. Dimer of a heavy and a light chain. Inability to self-assemble into filaments.

In terms of biological role, myosin is a protein that binds to F-actin and has ATPase activity that is activated by F-actin. The sequence is that of Myosin heavy chain IB (MIB) from Acanthamoeba castellanii (Amoeba).